The chain runs to 159 residues: Na(+)/H(+) antiporter subunit E1 (159 aa).

The next 4 membrane-spanning stretches (helical) occupy residues 1-21 (MAIQ…LSGS), 27-47 (LLLG…ILPG), 49-69 (FYFI…VELL), and 101-121 (WQIV…VLGI).

The protein belongs to the CPA3 antiporters (TC 2.A.63) subunit E family. In terms of assembly, may form a heterooligomeric complex that consists of seven subunits: mnhA1, mnhB1, mnhC1, mnhD1, mnhE1, mnhF1 and mnhG1.

Its subcellular location is the cell membrane. In terms of biological role, mnh complex is a Na(+)/H(+) antiporter involved in Na(+) excretion. This Staphylococcus haemolyticus (strain JCSC1435) protein is Na(+)/H(+) antiporter subunit E1 (mnhE1).